A 589-amino-acid chain; its full sequence is MTTASATPQQMRDRLLQAIDSHSNICNMVAVLDVITNLEKYPITKEALEETRLGKLINDVRKKTKDEDLAKRAKKLLRNWQKLIEPGQGDTPVRGPPNVPGSANGGAHPCRTDTPPAVPPPSKVAPELKTRNDIHNTYSPKAEKSSSRKRRAEQRDSPHLPAKMSKTSLYEPVYSSSPPSNGIRGTPEPLLEKDDEVPSDRIRLEHLDNDRHNKIPVNAVKPHPSSPGLTKLPSTSSLLKASVLQQARVDSGGQHQPKSPRYSSSPRSATHETMAKRSTTYAPKGTLSSPSLNSAQVPSPLPTLQPLTSPAQVCISDGPSSVGLEGSLHLHRSSDRVSQPPHSTATLEPLSGALLATHGLEGLETKAEREGASSNSDGKKRKKYRPRDYTVNLQGQSSEDRTKPRLKERRLTFDPVTGQIKPLTPKESHQEEECHGQPIPEPSVRTDIPQQKPPTSVPNPFQQTNWKELSRNEIIQSYLNLQSNVLTSSGAQTHGAHFFMTEYLKREEHDVKEPRKMHVLAPGSSTTELPGVSRDVTNEDLLRIHNEHWPGVNGCYDTKGAWFDWTDCISLDPHGDESKLNILPYVCLD.

The region spanning 10–87 (QMRDRLLQAI…RNWQKLIEPG (78 aa)) is the TFIIS N-terminal domain. Disordered stretches follow at residues 83-233 (LIEP…TKLP), 247-320 (ARVD…DGPS), and 363-441 (LETK…PIPE). Residues 190-213 (LLEKDDEVPSDRIRLEHLDNDRHN) are compositionally biased toward basic and acidic residues. Low complexity predominate over residues 259–268 (SPRYSSSPRS). Residues 276–297 (KRSTTYAPKGTLSSPSLNSAQV) show a composition bias toward polar residues. 2 stretches are compositionally biased toward basic and acidic residues: residues 398–412 (SEDR…RRLT) and 424–435 (TPKESHQEEECH).

The protein belongs to the Mediator complex subunit 26 family. Component of the Mediator complex.

The protein resides in the nucleus. In terms of biological role, component of the Mediator complex, a coactivator involved in the regulated transcription of nearly all RNA polymerase II-dependent genes. Mediator functions as a bridge to convey information from gene-specific regulatory proteins to the basal RNA polymerase II transcription machinery. Mediator is recruited to promoters by direct interactions with regulatory proteins and serves as a scaffold for the assembly of a functional preinitiation complex with RNA polymerase II and the general transcription factors. The chain is Mediator of RNA polymerase II transcription subunit 26 (med26) from Danio rerio (Zebrafish).